We begin with the raw amino-acid sequence, 334 residues long: Holliday junction branch migration complex subunit RuvB (334 aa).

Residues 1 to 182 (MDERLVSSEL…FGVLSRLEYY (182 aa)) form a large ATPase domain (RuvB-L) region. ATP is bound by residues L21, R22, G63, K66, T67, T68, 129-131 (EDF), R172, Y182, and R219. T67 contacts Mg(2+). Residues 183 to 253 (TRDELSEIVI…VAVDALERLQ (71 aa)) are small ATPAse domain (RuvB-S). The interval 256–334 (KLGLDHIDRK…HFKMEVPNHD (79 aa)) is head domain (RuvB-H). 2 residues coordinate DNA: R311 and R316.

This sequence belongs to the RuvB family. In terms of assembly, homohexamer. Forms an RuvA(8)-RuvB(12)-Holliday junction (HJ) complex. HJ DNA is sandwiched between 2 RuvA tetramers; dsDNA enters through RuvA and exits via RuvB. An RuvB hexamer assembles on each DNA strand where it exits the tetramer. Each RuvB hexamer is contacted by two RuvA subunits (via domain III) on 2 adjacent RuvB subunits; this complex drives branch migration. In the full resolvosome a probable DNA-RuvA(4)-RuvB(12)-RuvC(2) complex forms which resolves the HJ.

It is found in the cytoplasm. It catalyses the reaction ATP + H2O = ADP + phosphate + H(+). In terms of biological role, the RuvA-RuvB-RuvC complex processes Holliday junction (HJ) DNA during genetic recombination and DNA repair, while the RuvA-RuvB complex plays an important role in the rescue of blocked DNA replication forks via replication fork reversal (RFR). RuvA specifically binds to HJ cruciform DNA, conferring on it an open structure. The RuvB hexamer acts as an ATP-dependent pump, pulling dsDNA into and through the RuvAB complex. RuvB forms 2 homohexamers on either side of HJ DNA bound by 1 or 2 RuvA tetramers; 4 subunits per hexamer contact DNA at a time. Coordinated motions by a converter formed by DNA-disengaged RuvB subunits stimulates ATP hydrolysis and nucleotide exchange. Immobilization of the converter enables RuvB to convert the ATP-contained energy into a lever motion, pulling 2 nucleotides of DNA out of the RuvA tetramer per ATP hydrolyzed, thus driving DNA branch migration. The RuvB motors rotate together with the DNA substrate, which together with the progressing nucleotide cycle form the mechanistic basis for DNA recombination by continuous HJ branch migration. Branch migration allows RuvC to scan DNA until it finds its consensus sequence, where it cleaves and resolves cruciform DNA. This Bacillus licheniformis (strain ATCC 14580 / DSM 13 / JCM 2505 / CCUG 7422 / NBRC 12200 / NCIMB 9375 / NCTC 10341 / NRRL NRS-1264 / Gibson 46) protein is Holliday junction branch migration complex subunit RuvB.